The primary structure comprises 414 residues: Putative competence-damage inducible protein (414 aa).

The protein belongs to the CinA family.

The chain is Putative competence-damage inducible protein from Moorella thermoacetica (strain ATCC 39073 / JCM 9320).